The following is a 206-amino-acid chain: Large ribosomal subunit protein uL4 (206 aa).

Residues 63 to 97 form a disordered region; that stretch reads MYKQKGTGRARHHSARAPQFRGGGKAHGPVVRSHE. The span at 64–77 shows a compositional bias: basic residues; that stretch reads YKQKGTGRARHHSA.

Belongs to the universal ribosomal protein uL4 family. Part of the 50S ribosomal subunit.

In terms of biological role, one of the primary rRNA binding proteins, this protein initially binds near the 5'-end of the 23S rRNA. It is important during the early stages of 50S assembly. It makes multiple contacts with different domains of the 23S rRNA in the assembled 50S subunit and ribosome. Functionally, forms part of the polypeptide exit tunnel. The chain is Large ribosomal subunit protein uL4 from Rhizobium etli (strain ATCC 51251 / DSM 11541 / JCM 21823 / NBRC 15573 / CFN 42).